The chain runs to 94 residues: uncharacterized protein (94 aa).

In terms of domain architecture, HTH cro/C1-type spans 13 to 67 (IQESLDELNVSLREFARAMEIAPSTASRLLTGKAALTPEMAIKLSVVIGSSPQMW). Residues 24 to 43 (LREFARAMEIAPSTASRLLT) constitute a DNA-binding region (H-T-H motif).

Belongs to the VapA/VapI family.

This is an uncharacterized protein from Escherichia coli (strain K12).